The primary structure comprises 187 residues: Translation initiation factor IF-3 (187 aa).

The protein belongs to the IF-3 family. As to quaternary structure, monomer.

Its subcellular location is the cytoplasm. IF-3 binds to the 30S ribosomal subunit and shifts the equilibrium between 70S ribosomes and their 50S and 30S subunits in favor of the free subunits, thus enhancing the availability of 30S subunits on which protein synthesis initiation begins. The sequence is that of Translation initiation factor IF-3 from Leptospira biflexa serovar Patoc (strain Patoc 1 / Ames).